Here is a 498-residue protein sequence, read N- to C-terminus: Cytochrome c-552 (498 aa).

Positions 1–31 (MKNKERKLKSWQGWLIFSSSMVVVFCLGLLA) are cleaved as a signal peptide. A heme c-binding site is contributed by H119. Heme contacts are provided by C148, C151, and K152. 6 residues coordinate heme c: C186, C189, H190, C228, C231, and H232. The Ca(2+) site is built by E234, Y235, K280, and Q282. Y235 contributes to the substrate binding site. H283 lines the substrate pocket. Heme c is bound by residues H294, C301, C304, H305, H319, C332, C335, H336, and H411.

It belongs to the cytochrome c-552 family. Requires Ca(2+) as cofactor. Heme c serves as cofactor.

The protein localises to the periplasm. The enzyme catalyses 6 Fe(III)-[cytochrome c] + NH4(+) + 2 H2O = 6 Fe(II)-[cytochrome c] + nitrite + 8 H(+). Its pathway is nitrogen metabolism; nitrate reduction (assimilation). Catalyzes the reduction of nitrite to ammonia, consuming six electrons in the process. The sequence is that of Cytochrome c-552 from Porphyromonas gingivalis (strain ATCC BAA-308 / W83).